A 312-amino-acid polypeptide reads, in one-letter code: MNTPKSFFWAQEYFTPWDYTARAITRILAYRKTRFQEMLIAETGAYGKGLMLDGHWQSTTADEFLYHEALVHPALVQVVQAGGIPRRVLILGGAEGATLREVLRWRSVEQVVMVDIDGEVVEACREHLPEMHQGSFADPRAEVVIADALDFLGQTEPIWDAILSDLSDPVEAGPAYRLFTQEFFRQVRSKLQTAGAFVIQAGPTGPVELWQHTRIVHTLKTVFAAVQPYAIYAPTYGGPLGFALAAQDPISSRPEPEQVDQILAQHLDPDRGALRFIDGITLLGLYQVPAHLRRAIAAETTVYTLANPPQVE.

Residues 7-247 enclose the PABS domain; that stretch reads FFWAQEYFTP…GPLGFALAAQ (241 aa). S-methyl-5'-thioadenosine is bound at residue glutamine 36. Spermidine-binding residues include histidine 67 and glutamate 95. S-methyl-5'-thioadenosine contacts are provided by residues aspartate 115 and 147–148; that span reads DA. Catalysis depends on aspartate 165, which acts as the Proton acceptor. An S-methyl-5'-thioadenosine-binding site is contributed by proline 174.

The protein belongs to the spermidine/spermine synthase family. As to quaternary structure, homodimer or homotetramer.

It localises to the cytoplasm. The catalysed reaction is S-adenosyl 3-(methylsulfanyl)propylamine + putrescine = S-methyl-5'-thioadenosine + spermidine + H(+). It functions in the pathway amine and polyamine biosynthesis; spermidine biosynthesis; spermidine from putrescine: step 1/1. In terms of biological role, catalyzes the irreversible transfer of a propylamine group from the amino donor S-adenosylmethioninamine (decarboxy-AdoMet) to putrescine (1,4-diaminobutane) to yield spermidine. This Synechococcus sp. (strain JA-3-3Ab) (Cyanobacteria bacterium Yellowstone A-Prime) protein is Polyamine aminopropyltransferase.